The sequence spans 60 residues: Acidic phospholipase A2 (60 aa).

Tyr27, Gly29, and Gly31 together coordinate Ca(2+). A disulfide bond links Cys28 and Cys44. Residue His47 is part of the active site. Residue Asp48 coordinates Ca(2+).

It belongs to the phospholipase A2 family. Group II subfamily. D49 sub-subfamily. Monomer. Ca(2+) serves as cofactor. In terms of tissue distribution, expressed by the venom gland.

The protein localises to the secreted. It catalyses the reaction a 1,2-diacyl-sn-glycero-3-phosphocholine + H2O = a 1-acyl-sn-glycero-3-phosphocholine + a fatty acid + H(+). In terms of biological role, snake venom phospholipase A2 (PLA2) that exhibits an indirect hemolytic activity, a low myotoxicity, and induces edema. In addition, this enzyme has been shown to induce the release of some pro- and anti-inflammatory cytokines from human PBMC (IL12B, TNF-alpha, IL1B and IL6 but not variation has been observed for IL-8 and IL-10). PLA2 catalyzes the calcium-dependent hydrolysis of the 2-acyl groups in 3-sn-phosphoglycerides. This chain is Acidic phospholipase A2, found in Bothrops leucurus (Whitetail lancehead).